The sequence spans 293 residues: Ribosomal protein L11 methyltransferase (293 aa).

4 residues coordinate S-adenosyl-L-methionine: Thr-145, Gly-166, Asp-188, and Asn-230.

It belongs to the methyltransferase superfamily. PrmA family.

The protein resides in the cytoplasm. It catalyses the reaction L-lysyl-[protein] + 3 S-adenosyl-L-methionine = N(6),N(6),N(6)-trimethyl-L-lysyl-[protein] + 3 S-adenosyl-L-homocysteine + 3 H(+). Methylates ribosomal protein L11. This is Ribosomal protein L11 methyltransferase from Klebsiella pneumoniae (strain 342).